The following is a 333-amino-acid chain: tRNA N6-adenosine threonylcarbamoyltransferase (333 aa).

2 residues coordinate Fe cation: His111 and His115. Residues 134–138 (VVSGG), Asp167, Gly180, Asp184, and Asn269 contribute to the substrate site. Position 297 (Asp297) interacts with Fe cation.

It belongs to the KAE1 / TsaD family. Fe(2+) serves as cofactor.

It localises to the cytoplasm. The enzyme catalyses L-threonylcarbamoyladenylate + adenosine(37) in tRNA = N(6)-L-threonylcarbamoyladenosine(37) in tRNA + AMP + H(+). Its function is as follows. Required for the formation of a threonylcarbamoyl group on adenosine at position 37 (t(6)A37) in tRNAs that read codons beginning with adenine. Is involved in the transfer of the threonylcarbamoyl moiety of threonylcarbamoyl-AMP (TC-AMP) to the N6 group of A37, together with TsaE and TsaB. TsaD likely plays a direct catalytic role in this reaction. The protein is tRNA N6-adenosine threonylcarbamoyltransferase of Carboxydothermus hydrogenoformans (strain ATCC BAA-161 / DSM 6008 / Z-2901).